A 232-amino-acid chain; its full sequence is Small ribosomal subunit protein uS3 (232 aa).

Positions 39-107 (VRQFLTKELA…PAQINIAEVR (69 aa)) constitute a KH type-2 domain.

The protein belongs to the universal ribosomal protein uS3 family. As to quaternary structure, part of the 30S ribosomal subunit. Forms a tight complex with proteins S10 and S14.

Its function is as follows. Binds the lower part of the 30S subunit head. Binds mRNA in the 70S ribosome, positioning it for translation. The protein is Small ribosomal subunit protein uS3 of Erwinia tasmaniensis (strain DSM 17950 / CFBP 7177 / CIP 109463 / NCPPB 4357 / Et1/99).